The following is a 208-amino-acid chain: Putative 3-methyladenine DNA glycosylase (208 aa).

The protein belongs to the DNA glycosylase MPG family.

This is Putative 3-methyladenine DNA glycosylase from Nitrobacter winogradskyi (strain ATCC 25391 / DSM 10237 / CIP 104748 / NCIMB 11846 / Nb-255).